We begin with the raw amino-acid sequence, 206 residues long: Glutathione S-transferase class-mu 28 kDa isozyme (206 aa).

A GST N-terminal domain is found at 1 to 81 (VKLIYFNGRG…FIARKHNMMG (81 aa)). Glutathione-binding positions include Y5, 5–6 (YF), R11, 36–40 (WPKIK), L48, 50–51 (IV), and 65–66 (ES). Positions 83–206 (TDDEYYIIEK…YLSERHATAF (124 aa)) constitute a GST C-terminal domain.

The protein belongs to the GST superfamily. Mu family. Homodimer.

It carries out the reaction RX + glutathione = an S-substituted glutathione + a halide anion + H(+). Conjugation of reduced glutathione to a wide number of exogenous and endogenous hydrophobic electrophiles. In terms of biological role, GST isoenzymes appear to play a central role in the parasite detoxification system. Other functions are also suspected including a role in increasing the solubility of haematin in the parasite gut. This Schistosoma japonicum (Blood fluke) protein is Glutathione S-transferase class-mu 28 kDa isozyme.